We begin with the raw amino-acid sequence, 236 residues long: UPF0257 lipoprotein YnfC (236 aa).

A signal peptide spans 1-16 (MKYKLLPCLLAIFLTG). A lipid anchor (N-palmitoyl cysteine) is attached at Cys-17. Residue Cys-17 is the site of S-diacylglycerol cysteine attachment.

This sequence belongs to the UPF0257 family.

The protein resides in the cell membrane. This chain is UPF0257 lipoprotein YnfC, found in Escherichia coli O7:K1 (strain IAI39 / ExPEC).